Consider the following 185-residue polypeptide: Ribosome-recycling factor (185 aa).

This sequence belongs to the RRF family.

It localises to the cytoplasm. Functionally, responsible for the release of ribosomes from messenger RNA at the termination of protein biosynthesis. May increase the efficiency of translation by recycling ribosomes from one round of translation to another. This is Ribosome-recycling factor from Vibrio parahaemolyticus serotype O3:K6 (strain RIMD 2210633).